The primary structure comprises 215 residues: Large ribosomal subunit protein uL16 (215 aa).

The interval 1 to 22 (MGRRPARCYRQPKGKPYPKSRY) is disordered.

It belongs to the universal ribosomal protein uL16 family.

The polypeptide is Large ribosomal subunit protein uL16 (RPL10) (Tetrahymena thermophila (strain SB210)).